Reading from the N-terminus, the 844-residue chain is MPYDPAISEPRWQEAWEQADTFRAVRDERPKYYVLEMFPYPSGRIHMGHVRNYTMGDVVARFKRAQGFSVLHPMGWDAFGMPAENAAMEQGGHPRDWTYGNIATMRGQLKPLGLSIDWSREFATCDDAYVAQQQALFLDMLEAGLITRKSAQVNWDPVDMTVLANEQVIDGKGWRSGATVERKELTQWFFKISDYSDELLSALDGLEGWPEKVRLMQANWIGKSRGLQFRFHTVDLPDFPTIEVYTTRPDTLMGASFVALSPDHPLVKALAASDPKVAAFVEECRRIGTTEEAIETAPKMGFDTGLTVRHPLDADWRLPIWIANFVLMDYGTGAIFGSPAHDERDHEFATKYGLPIRATFGERGMDLEQADALVAKAPFVPLKSETVTYVRGFAGAADQTGEAAVDAAIRHAEVAGYGEGVTKFRLRDWGISRQRYWGCPIPVVHCDACGTVPEAKANLPVLLPQDVSFEVPGNPLNRHPTWAATTCPKCGGPARRETDTMDTFVDSSWYYARFTSPHAATPTDRPETDYWMNVDQYIGGIEHAILHLLYSRFFARAMVKTGHLPESAKEPFDALFTQGMVTHEIYMTRDERGRPVYHLPEDVVDGKLADGTPVEVIPSAKMSKSKKNVVDPVNIVEGFGADTARWFMLSDSPPERDVEWTAAGAEAANRFLARVWRLADEIPEDGADPDLTRAAHRAIDEVTRAIEGFAFNKAVAKIYELANAIAKSGAGGESRREALRIMAQLMAPMVPHLAEEIWMKAGGQGMVVDATWPKADPALLVSDSVVLPIQINGKRRAEIEVPKDMPKDQIEAIVLADETVRRFMEGQAPKKLIVVPGRIVNVVV.

A 'HIGH' region motif is present at residues 39–49; it reads PYPSGRIHMGH. A 'KMSKS' region motif is present at residues 621 to 625; sequence KMSKS. Lys624 contacts ATP.

Belongs to the class-I aminoacyl-tRNA synthetase family.

It is found in the cytoplasm. It carries out the reaction tRNA(Leu) + L-leucine + ATP = L-leucyl-tRNA(Leu) + AMP + diphosphate. In Paracoccus denitrificans (strain Pd 1222), this protein is Leucine--tRNA ligase.